The sequence spans 33 residues: Photosystem II reaction center protein T (33 aa).

Residues 3–23 (ALVYTFLLVSTLGIIFFAIFF) traverse the membrane as a helical segment.

This sequence belongs to the PsbT family. PSII is composed of 1 copy each of membrane proteins PsbA, PsbB, PsbC, PsbD, PsbE, PsbF, PsbH, PsbI, PsbJ, PsbK, PsbL, PsbM, PsbT, PsbY, PsbZ, Psb30/Ycf12, at least 3 peripheral proteins of the oxygen-evolving complex and a large number of cofactors. It forms dimeric complexes.

The protein localises to the plastid. Its subcellular location is the chloroplast thylakoid membrane. Functionally, found at the monomer-monomer interface of the photosystem II (PS II) dimer, plays a role in assembly and dimerization of PSII. PSII is a light-driven water plastoquinone oxidoreductase, using light energy to abstract electrons from H(2)O, generating a proton gradient subsequently used for ATP formation. This Arabidopsis thaliana (Mouse-ear cress) protein is Photosystem II reaction center protein T.